Reading from the N-terminus, the 358-residue chain is Trace amine-associated receptor 7b (358 aa).

At 1–47 (MATDNDSFPWDQDSILSSDMFSATSTELCYENLNRSCVRSPYSPGPR) the chain is on the extracellular side. Asparagine 5 and asparagine 34 each carry an N-linked (GlcNAc...) asparagine glycan. 2 disulfide bridges follow: cysteine 37–cysteine 201 and cysteine 120–cysteine 205. The chain crosses the membrane as a helical span at residues 48–68 (LILYAVFGFGAALAVCGNLLV). The Cytoplasmic portion of the chain corresponds to 69 to 83 (MTSILHFRQLHSPAN). The chain crosses the membrane as a helical span at residues 84–104 (FLVVSLACADFLVGLTVMPFS). At 105–121 (TVRSVEGCWYFGESYCK) the chain is on the extracellular side. Residues 122-143 (LHTCFDVSFCYCSIFHLCFISV) form a helical membrane-spanning segment. Over 144–166 (DRYIAVSDPLTYPTRFTAFVSGK) the chain is Cytoplasmic. The chain crosses the membrane as a helical span at residues 167-187 (CITFSWLLSTIYGFSLLYTGA). Topologically, residues 188 to 212 (NEAGLEDLVSALTCVGGCQLAVNQS) are extracellular. Asparagine 210 carries an N-linked (GlcNAc...) asparagine glycan. Residues 213 to 233 (WVFINFLLFLIPTLVMITVYS) form a helical membrane-spanning segment. At 234–274 (KIFLIAKQQAQNIEKMSKQTARASDSYKDRVAKRERKAAKT) the chain is on the cytoplasmic side. A helical transmembrane segment spans residues 275–295 (LGIAVAAFLLSWLPYFIDSII). The Extracellular segment spans residues 296–309 (DAFLGFITPTYVYE). The chain crosses the membrane as a helical span at residues 310–333 (ILVWIAYYNSAMNPLIYAFFYPWF). The Cytoplasmic portion of the chain corresponds to 334–358 (RKAIKLIVSGKVLRENSSTTNLFPE).

It belongs to the G-protein coupled receptor 1 family. As to expression, specifically expressed in neurons of the olfactory epithelium.

The protein localises to the cell membrane. Functionally, olfactory receptor specific for N,N-dimethylalkylamines trace amines, such as N,N-dimethylcyclohexylamine. Trace amine compounds are enriched in animal body fluids and act on trace amine-associated receptors (TAARs) to elicit both intraspecific and interspecific innate behaviors. Ligand-binding causes a conformation change that triggers signaling via G(s)-class of G alpha proteins (GNAL or GNAS). This is Trace amine-associated receptor 7b from Mus musculus (Mouse).